The sequence spans 277 residues: Carbonyl reductase [NADPH] 1 (277 aa).

Ser2 is subject to N-acetylserine. Phosphoserine occurs at positions 2 and 30. NADP(+) contacts are provided by residues 10 to 34, 63 to 64, and Asn90; these read VTGGNKGIGLAIVRDLCRLFSGDVV and DI. Residues 95–97 and Gln106 each bind glutathione; that span reads FKV. A substrate-binding site is contributed by Ser140. Position 193–194 (193–194) interacts with glutathione; it reads AY. Tyr194 functions as the Proton acceptor in the catalytic mechanism. NADP(+)-binding positions include 194-198 and 231-233; these read YGVTK and VRT. At Lys239 the chain carries N6-1-carboxyethyl lysine.

This sequence belongs to the short-chain dehydrogenases/reductases (SDR) family. In terms of assembly, monomer.

The protein resides in the cytoplasm. It carries out the reaction a secondary alcohol + NADP(+) = a ketone + NADPH + H(+). The catalysed reaction is prostaglandin F2alpha + NADP(+) = prostaglandin E2 + NADPH + H(+). The enzyme catalyses prostaglandin E1 + NADP(+) = 15-oxoprostaglandin E1 + NADPH + H(+). It catalyses the reaction menadione + NADPH + H(+) = menadiol + NADP(+). It carries out the reaction prostaglandin D2 + NADP(+) = 15-oxoprostaglandin D2 + NADPH + H(+). The catalysed reaction is prostaglandin E2 + NADP(+) = 15-oxoprostaglandin E2 + NADPH + H(+). The enzyme catalyses prostaglandin F2alpha + NADP(+) = 15-oxoprostaglandin F2alpha + NADPH + H(+). It catalyses the reaction daunorubicin + NADPH + H(+) = 13-dihydrodaunorubicin + NADP(+). It carries out the reaction S-nitrosoglutathione + NADPH + H(+) = S-(hydroxysulfenamide)glutathione + NADP(+). The catalysed reaction is a primary alcohol + NADP(+) = an aldehyde + NADPH + H(+). The enzyme catalyses cortisol + NADPH + H(+) = 20beta-dihydrocortisol + NADP(+). It catalyses the reaction corticosterone + NADPH + H(+) = 20beta-dihydrocorticosterone + NADP(+). Functionally, NADPH-dependent reductase with broad substrate specificity. Catalyzes the reduction of a wide variety of carbonyl compounds including quinones, prostaglandins, menadione, plus various xenobiotics. Catalyzes the reduction of the antitumor anthracyclines doxorubicin and daunorubicin to the cardiotoxic compounds doxorubicinol and daunorubicinol. Can convert prostaglandin E to prostaglandin F2-alpha. Can bind glutathione, which explains its higher affinity for glutathione-conjugated substrates. Catalyzes the reduction of S-nitrosoglutathione. In addition, participates in the glucocorticoid metabolism by catalyzing the NADPH-dependent cortisol/corticosterone into 20beta-dihydrocortisol (20b-DHF) or 20beta-corticosterone (20b-DHB), which are weak agonists of NR3C1 and NR3C2 in adipose tissue. The sequence is that of Carbonyl reductase [NADPH] 1 from Pongo abelii (Sumatran orangutan).